Reading from the N-terminus, the 94-residue chain is Small ribosomal subunit protein bS6 (94 aa).

It belongs to the bacterial ribosomal protein bS6 family.

Functionally, binds together with bS18 to 16S ribosomal RNA. The sequence is that of Small ribosomal subunit protein bS6 from Akkermansia muciniphila (strain ATCC BAA-835 / DSM 22959 / JCM 33894 / BCRC 81048 / CCUG 64013 / CIP 107961 / Muc).